The following is a 231-amino-acid chain: Phosphoglycolate phosphatase, plasmid (231 aa).

The active-site Nucleophile is the Asp14. Mg(2+) contacts are provided by Asp14, Asp16, and Asp175.

Belongs to the HAD-like hydrolase superfamily. CbbY/CbbZ/Gph/YieH family. As to quaternary structure, homotrimer. Mg(2+) serves as cofactor.

It catalyses the reaction 2-phosphoglycolate + H2O = glycolate + phosphate. It participates in organic acid metabolism; glycolate biosynthesis; glycolate from 2-phosphoglycolate: step 1/1. Specifically catalyzes the dephosphorylation of 2-phosphoglycolate. Is involved in the dissimilation of the intracellular 2-phosphoglycolate formed during the DNA repair of 3'-phosphoglycolate ends, a major class of DNA lesions induced by oxidative stress. The sequence is that of Phosphoglycolate phosphatase, plasmid (cbbZP) from Cupriavidus necator (strain ATCC 17699 / DSM 428 / KCTC 22496 / NCIMB 10442 / H16 / Stanier 337) (Ralstonia eutropha).